Reading from the N-terminus, the 859-residue chain is Protein SEY1 (859 aa).

At 1–742 the chain is on the cytoplasmic side; it reads MMMNSHFAGV…KRSAIGGITQ (742 aa). The GB1/RHD3-type G domain occupies 49–291; it reads GFNYHLISVF…FQPQYHRRIP (243 aa). 59–66 lines the GTP pocket; that stretch reads GSQSTGKS. A coiled-coil region spans residues 476-496; that stretch reads FEHELKVYRKDLDDVSGRLRK. Residues 525-544 are disordered; it reads LGTGRGGSGAPEHGERPPSE. Residues 743–763 traverse the membrane as a helical segment; it reads VPLYFYGLLVALGWNEIVAVL. The Lumenal portion of the chain corresponds to 764–766; that stretch reads RNP. A helical transmembrane segment spans residues 767–787; sequence VYFIFLILCAVGAYVTYTLNL. Residues 788–859 lie on the Cytoplasmic side of the membrane; that stretch reads WGPMIRMGNA…DAEVEDLDDI (72 aa). The tract at residues 816–859 is disordered; it reads SSESGRQAMAMSGNQPRGESVRMNRLNGNGKKDEDAEVEDLDDI. Residues 850-859 show a composition bias toward acidic residues; that stretch reads DAEVEDLDDI.

This sequence belongs to the TRAFAC class dynamin-like GTPase superfamily. GB1/RHD3 GTPase family. RHD3 subfamily.

The protein resides in the endoplasmic reticulum membrane. Its function is as follows. Cooperates with the reticulon proteins and tubule-shaping DP1 family proteins to generate and maintain the structure of the tubular endoplasmic reticulum network. Has GTPase activity, which is required for its function in ER organization. The protein is Protein SEY1 of Phaeosphaeria nodorum (strain SN15 / ATCC MYA-4574 / FGSC 10173) (Glume blotch fungus).